We begin with the raw amino-acid sequence, 433 residues long: L-lysine 2,3-aminomutase (433 aa).

The Radical SAM core domain occupies 122–334 (HRYPDRVLFY…SLIGHTTGFA (213 aa)). 3 residues coordinate [4Fe-4S] cluster: C136, C140, and C143. Residue C279 coordinates Zn(2+). K348 carries the post-translational modification N6-(pyridoxal phosphate)lysine. Residues C389, C392, and C396 each coordinate Zn(2+).

Belongs to the radical SAM superfamily. KamA family. [4Fe-4S] cluster is required as a cofactor. Requires pyridoxal 5'-phosphate as cofactor. It depends on Zn(2+) as a cofactor.

The enzyme catalyses L-lysine = (3S)-3,6-diaminohexanoate. Its function is as follows. Catalyzes the interconversion of L-alpha-lysine and L-beta-lysine. Is involved in the biosynthesis pathway of N6-acetyl-beta-lysine, a compatible solute produced by methanogenic archaea that helps cells to cope with salt stress. This is L-lysine 2,3-aminomutase (ablA) from Methanococcus maripaludis (strain DSM 14266 / JCM 13030 / NBRC 101832 / S2 / LL).